Here is a 192-residue protein sequence, read N- to C-terminus: MNQSKQLVRLIEIAIMTAAAVILDIVSGMFLSMPQGGSVSIMMIPIFLISFRWGVKAGLTTGLLTGLVQIAIGNLFAQHPVQLLLDYIVAFAAIGISGCFASSVRKAAVSKTKGKLIVSVVSAVFIGSLLRYAAHVISGAVFFGSFAPKGTPVWIYSLTYNATYMVPSFIICAIVLCLLFMTAPRLLKSDKA.

6 consecutive transmembrane segments (helical) span residues 10-30, 31-51, 57-77, 81-101, 123-143, and 164-184; these read LIEIAIMTAAAVILDIVSGMF, LSMPQGGSVSIMMIPIFLISF, AGLTTGLLTGLVQIAIGNLFA, VQLLLDYIVAFAAIGISGCFA, AVFIGSLLRYAAHVISGAVFF, and YMVPSFIICAIVLCLLFMTAP.

This sequence belongs to the vitamin uptake transporter (VUT/ECF) (TC 2.A.88) family. Thiamine transporter subfamily. Forms a stable energy-coupling factor (ECF) transporter complex composed of a membrane-embedded substrate-binding protein (S component), two ATP-binding proteins (A components) and a transmembrane protein (T component).

It is found in the cell membrane. Functionally, probably a thiamine-binding protein that interacts with the energy-coupling factor (ECF) ABC-transporter complex. Unlike classic ABC transporters this ECF transporter provides the energy necessary to transport a number of different substrates. The substrates themselves are bound by transmembrane, not extracytoplasmic soluble proteins. The protein is Thiamine transporter ThiT (thiT) of Bacillus subtilis (strain 168).